The following is a 99-amino-acid chain: Translation initiation factor 1A (99 aa).

In terms of domain architecture, S1-like spans 11–84 (RRVRTPRRGE…EKADIVWRYT (74 aa)).

Belongs to the eIF-1A family.

Its function is as follows. Seems to be required for maximal rate of protein biosynthesis. Enhances ribosome dissociation into subunits and stabilizes the binding of the initiator Met-tRNA(I) to 40 S ribosomal subunits. In Methanothermobacter thermautotrophicus (strain ATCC 29096 / DSM 1053 / JCM 10044 / NBRC 100330 / Delta H) (Methanobacterium thermoautotrophicum), this protein is Translation initiation factor 1A (eIF1A).